The following is a 2499-amino-acid chain: Probable polyketide synthase 23 (2499 aa).

The region spanning 11-430 (DNQVAIVGLG…GSNACVLLSE (420 aa)) is the Ketosynthase family 3 (KS3) domain. Active-site for beta-ketoacyl synthase activity residues include Cys177, His316, and His354. An acyl/malonyl transferases region spans residues 623–656 (GITPSIIVGHSLGEVASAFCSGMIDLETACFVIY). Ser633 acts as the For acyl/malonyl transferase activity in catalysis. Positions 924–1044 (INQLGNKNEL…SRILMKSLDV (121 aa)) are N-terminal hotdog fold. The PKS/mFAS DH domain occupies 924–1209 (INQLGNKNEL…IASTLSTNID (286 aa)). His956 functions as the Proton acceptor; for dehydratase activity in the catalytic mechanism. Residues 1059-1209 (NWSTLKREQL…IASTLSTNID (151 aa)) are C-terminal hotdog fold. Asp1121 functions as the Proton donor; for dehydratase activity in the catalytic mechanism. Residues 2414 to 2491 (EKEFSIRQDI…QIINIVTTKV (78 aa)) enclose the Carrier domain. Ser2451 carries the post-translational modification O-(pantetheine 4'-phosphoryl)serine.

It depends on pantetheine 4'-phosphate as a cofactor.

Functionally, probable polyketide synthase. The chain is Probable polyketide synthase 23 (pks23) from Dictyostelium discoideum (Social amoeba).